Consider the following 88-residue polypeptide: Small ribosomal subunit protein bS20 (88 aa).

The disordered stretch occupies residues 1 to 20 (MANIKQQKKRNKTNEKRRLR).

The protein belongs to the bacterial ribosomal protein bS20 family.

Functionally, binds directly to 16S ribosomal RNA. This is Small ribosomal subunit protein bS20 from Phytoplasma australiense.